We begin with the raw amino-acid sequence, 411 residues long: MRIALLSYRSKTHCGGQGVYVRHLSRELAELGHDVEVFSGQPYPEGLDPRVRLTKVPSLDLYREPDPFRIPRPSEIKTSIDLEELLTTWTAGFPEPKTFSLRAARVLAGRRGDFDVVHDNQCLGTGLLQIAKMGFPLVATVHHPITRDREVEVAAARWWRKPLVRRWYGFVEMQKRVARQIPELLTVSSASASDILTDFAVSPEQLHVVPLGVDTKLFQPREGRVRNRIIAIASADVPLKGVSHLLHAVARLRVERDVELQLVTKLEPNGPTEKLIAELGISDIVHTSSGLSDEELAALLASAEVACIPSLYEGFSLPAVEAMASGTPIVASRAGALPEVVGPDGECARLVTPADVDELTAVLGRLLDSPRELRRLGDNGRRRAVEVFSWQSVAAQTVAVYEKAIARVAAC.

The protein belongs to the glycosyltransferase group 1 family. Glycosyltransferase 4 subfamily.

The enzyme catalyses [3-O-methyl-alpha-D-mannosyl-(1-&gt;4)](n)-3-O-methyl-D-mannose + GDP-alpha-D-mannose = alpha-D-mannosyl-(1-&gt;4)-[3-O-methyl-alpha-D-mannosyl-(1-&gt;4)](n)-3-O-methyl-D-mannose + GDP + H(+). It carries out the reaction [3-O-methyl-alpha-D-mannosyl-(1-&gt;4)](n)-1-O,3-O-dimethyl-alpha-D-mannose + GDP-alpha-D-mannose = alpha-D-mannosyl-(1-&gt;4)-[3-O-methyl-alpha-D-mannosyl-(1-&gt;4)](n)-1-O,3-O-dimethyl-alpha-D-mannose + GDP + H(+). Its activity is regulated as follows. Activity is significantly enhanced in the presence of Mg(2+). Its function is as follows. Glycosyltransferase involved in the biosynthesis of 3-O-methylmannose polysaccharides (MMP), which are intracellular polymethylated polysaccharides implicated in the modulation of fatty acid metabolism in non-tuberculous mycobacteria. Highly specific alpha-(1-&gt;4)-mannosyltransferase that can transfer mannose units from GDP-mannose to a wide range of alpha-(1-&gt;4) oligomannosides longer than three mannoses, including all hydrolytic products of MmpH. Can use synthetic trimannosides and tetramannosides as substrates, but not mono- and disaccharides, and is significantly more active with the methylated substrates, preferring the tetramannosides over the trimannosides. In Mycolicibacterium hassiacum (strain DSM 44199 / CIP 105218 / JCM 12690 / 3849) (Mycobacterium hassiacum), this protein is MMP alpha-(1-&gt;4)-mannosyltransferase.